The sequence spans 261 residues: tRNA pseudouridine synthase A (261 aa).

Catalysis depends on D52, which acts as the Nucleophile. Position 110 (Y110) interacts with substrate.

It belongs to the tRNA pseudouridine synthase TruA family. Homodimer.

The enzyme catalyses uridine(38/39/40) in tRNA = pseudouridine(38/39/40) in tRNA. Its function is as follows. Formation of pseudouridine at positions 38, 39 and 40 in the anticodon stem and loop of transfer RNAs. The polypeptide is tRNA pseudouridine synthase A (Blochmanniella pennsylvanica (strain BPEN)).